We begin with the raw amino-acid sequence, 773 residues long: DNA gyrase subunit B (773 aa).

Residues 416–530 (SEIFLVEGDS…QGHVFIAQAP (115 aa)) enclose the Toprim domain. Mg(2+) is bound by residues Glu-422, Asp-495, and Asp-497.

This sequence belongs to the type II topoisomerase GyrB family. As to quaternary structure, heterotetramer, composed of two GyrA and two GyrB chains. In the heterotetramer, GyrA contains the active site tyrosine that forms a transient covalent intermediate with DNA, while GyrB binds cofactors and catalyzes ATP hydrolysis. Requires Mg(2+) as cofactor. Mn(2+) is required as a cofactor. The cofactor is Ca(2+).

The protein localises to the cytoplasm. It catalyses the reaction ATP-dependent breakage, passage and rejoining of double-stranded DNA.. In terms of biological role, a type II topoisomerase that negatively supercoils closed circular double-stranded (ds) DNA in an ATP-dependent manner to modulate DNA topology and maintain chromosomes in an underwound state. Negative supercoiling favors strand separation, and DNA replication, transcription, recombination and repair, all of which involve strand separation. Also able to catalyze the interconversion of other topological isomers of dsDNA rings, including catenanes and knotted rings. Type II topoisomerases break and join 2 DNA strands simultaneously in an ATP-dependent manner. The protein is DNA gyrase subunit B of Helicobacter pylori (strain J99 / ATCC 700824) (Campylobacter pylori J99).